The chain runs to 65 residues: Large ribosomal subunit protein bL35 (65 aa).

Basic residues predominate over residues 1-16 (MPKMKTKSSAKKRFKV). The disordered stretch occupies residues 1 to 26 (MPKMKTKSSAKKRFKVRSSGGIKRSQ).

Belongs to the bacterial ribosomal protein bL35 family.

The polypeptide is Large ribosomal subunit protein bL35 (Azoarcus sp. (strain BH72)).